Here is a 585-residue protein sequence, read N- to C-terminus: S-antigen protein (585 aa).

Positions 1 to 23 (MNRILSVTLCLFFIYLYIYKTYG) are cleaved as a signal peptide. The interval 51–585 (NGKGQKYEDL…NSIINMLIGM (535 aa)) is disordered. Acidic residues predominate over residues 59–85 (DLEEEKEGENDDEEDSNSEESNNDEEN). Residues 96-113 (QETHGSEDEVSNGREDKV) are compositionally biased toward basic and acidic residues. 56 consecutive repeat copies span residues 102 to 109 (EDEVSNGR), 110 to 117 (EDKVSNGG), 118 to 125 (EDEVSNGG), 126 to 133 (EDEVSNGR), 134 to 141 (EDKVSNGG), 142 to 149 (EDEVSNGR), 150 to 157 (EDKVSNGG), 158 to 165 (EDEVSNGR), 166 to 173 (EDKVSNGG), 174 to 181 (EDEVSNGR), 182 to 189 (EDKVSNGG), 190 to 197 (EDEVSNGR), 198 to 205 (EDKVSNGR), 206 to 213 (EDKVSNGG), 214 to 221 (EDEVSNGR), 222 to 229 (EDKVSNGR), 230 to 237 (EDKVSNGG), 238 to 245 (EDEVSNGR), 246 to 253 (EDKVSNGG), 254 to 261 (EDEVSNGR), 262 to 269 (EDKVSNGG), 270 to 277 (EDEVSNGR), 278 to 285 (EDKVSNGR), 286 to 293 (EDEVSNGR), 294 to 301 (EDKVSNGG), 302 to 309 (EDEVSNGR), 310 to 317 (EDKVSNGG), 318 to 325 (EDEVSNGR), 326 to 333 (EDKVSNGR), 334 to 341 (EDKVSNGG), 342 to 349 (EDEVSNGR), 350 to 357 (EDKVSNGG), 358 to 365 (EDEVSNGR), 366 to 373 (EDKVSNGR), 374 to 381 (EDKVSNGR), 382 to 389 (EDEVSNGR), 390 to 397 (EDKVSNGG), 398 to 405 (EDEVSNGR), 406 to 413 (EDKVSNGR), 414 to 421 (EDKVSNGG), 422 to 429 (EDEVSNGR), 430 to 437 (EDKVSNGG), 438 to 445 (EDEVSNGR), 446 to 453 (EDKVSNGR), 454 to 461 (EDKVSNGR), 462 to 469 (EDKVSNGG), 470 to 477 (EDEVSNGG), 478 to 485 (EDEVSNGR), 486 to 493 (EDKVSNGG), 494 to 501 (EDEVSNGR), 502 to 509 (EDKVSNGG), 510 to 517 (EDEVSNGR), 518 to 525 (EDKVSNGG), 526 to 533 (EDEVSNGR), 534 to 541 (EDKVSNGR), and 542 to 549 (EDEVSNGR). The tract at residues 102–549 (EDEVSNGRED…GREDEVSNGR (448 aa)) is 56 X 8 AA tandem repeats of E-D-[EK]-V-S-N-G-[RG]. Acidic residues predominate over residues 117 to 129 (GEDEVSNGGEDEV). Basic and acidic residues-rich tracts occupy residues 194 to 209 (SNGR…EDKV) and 218 to 233 (SNGR…EDKV). Positions 274-297 (SNGREDKVSNGREDEVSNGREDKV) are enriched in basic and acidic residues. The segment covering 322–337 (SNGREDKVSNGREDKV) has biased composition (basic and acidic residues). Composition is skewed to basic and acidic residues over residues 362-393 (SNGR…EDKV) and 402-417 (SNGR…EDKV). Positions 442 to 465 (SNGREDKVSNGREDKVSNGREDKV) are enriched in basic and acidic residues. Acidic residues predominate over residues 469–481 (GEDEVSNGGEDEV). Composition is skewed to basic and acidic residues over residues 530–553 (SNGR…EDKG) and 560–569 (ELSHNSESHT). Over residues 576 to 585 (NSIINMLIGM) the composition is skewed to low complexity.

The protein localises to the parasitophorous vacuole. S antigens are soluble heat-stable proteins present in the sera of some infected individuals. This Plasmodium falciparum (isolate 3D7) protein is S-antigen protein.